The following is a 144-amino-acid chain: uncharacterized protein (144 aa).

Residues 124-133 (KALNRKKSKT) are compositionally biased toward basic residues. The interval 124–144 (KALNRKKSKTKNGEKNGEGKS) is disordered. Basic and acidic residues predominate over residues 134–144 (KNGEKNGEGKS).

This is an uncharacterized protein from Acidianus filamentous virus 1 (isolate United States/Yellowstone) (AFV-1).